The chain runs to 33 residues: Alpha-amanitin proprotein (33 aa).

Residues 1–10 (MSDINATRLP) constitute a propeptide that is removed on maturation. Ile11 bears the (3R,4R)-4,5-dihydroxyisoleucine; in form alpha-amanitin mark. Ile11 bears the (3R,4S)-4-hydroxyisoleucine; in form gamma-amanitin mark. Residues 11-18 (IWGIGCNP) constitute a cross-link (cyclopeptide (Ile-Pro)). A cross-link (2'-cysteinyl-6'-hydroxytryptophan sulfoxide (Trp-Cys)) is located at residues 12–16 (WGIGC). 4-hydroxyproline is present on Pro18. The propeptide occupies 19–33 (CVGDEVTALLTRGEA).

This sequence belongs to the MSDIN fungal toxin family. Post-translationally, processed by the macrocyclase-peptidase enzyme POPB to yield a toxic cyclic decapeptide. POPB first removes 10 residues from the N-terminus. Conformational trapping of the remaining peptide forces the enzyme to release this intermediate rather than proceed to macrocyclization. The enzyme rebinds the remaining peptide in a different conformation and catalyzes macrocyclization of the N-terminal 8 residues.

Its function is as follows. Major toxin belonging to the bicyclic octapeptides amatoxins that acts by binding non-competitively to RNA polymerase II and greatly slowing the elongation of transcripts from target promoters. This Amanita fuligineoides protein is Alpha-amanitin proprotein.